The following is a 257-amino-acid chain: Anamorsin homolog (257 aa).

Positions 1–132 (MSVLALDVAR…ARGTAFALKS (132 aa)) are N-terminal SAM-like domain. The linker stretch occupies residues 133–171 (RAVRVNATAADAADAWGASAAADDDELIDESALLTELDV). 4 residues coordinate [2Fe-2S] cluster: cysteine 181, cysteine 190, cysteine 193, and cysteine 195. The tract at residues 181–195 (CDVGAGKKACKNCTC) is fe-S binding site A. The [4Fe-4S] cluster site is built by cysteine 219, cysteine 222, cysteine 230, and cysteine 233. Short sequence motifs (cx2C motif) lie at residues 219-222 (CGNC) and 230-233 (CAGC). Residues 219-233 (CGNCALGDAFRCAGC) are fe-S binding site B.

It belongs to the anamorsin family. As to quaternary structure, monomer. Requires [2Fe-2S] cluster as cofactor. [4Fe-4S] cluster is required as a cofactor.

The protein resides in the cytoplasm. It localises to the mitochondrion intermembrane space. Its function is as follows. Component of the cytosolic iron-sulfur (Fe-S) protein assembly (CIA) machinery. Required for the maturation of extramitochondrial Fe-S proteins. Part of an electron transfer chain functioning in an early step of cytosolic Fe-S biogenesis, facilitating the de novo assembly of a [4Fe-4S] cluster on the cytosolic Fe-S scaffold complex. Electrons are transferred from NADPH via a FAD- and FMN-containing diflavin oxidoreductase. Together with the diflavin oxidoreductase, also required for the assembly of the diferric tyrosyl radical cofactor of ribonucleotide reductase (RNR), probably by providing electrons for reduction during radical cofactor maturation in the catalytic small subunit. This chain is Anamorsin homolog, found in Ostreococcus lucimarinus (strain CCE9901).